The sequence spans 215 residues: Negative modulator of initiation of replication (215 aa).

The interval 71–93 is disordered; that stretch reads AETPKPSSEQEIRTPARKQSTQS. Residues 181 to 187 form an interaction with DNA region; the sequence is NTNSGRK.

Belongs to the SeqA family. In terms of assembly, homodimer. Polymerizes to form helical filaments.

The protein localises to the cytoplasm. Negative regulator of replication initiation, which contributes to regulation of DNA replication and ensures that replication initiation occurs exactly once per chromosome per cell cycle. Binds to pairs of hemimethylated GATC sequences in the oriC region, thus preventing assembly of replication proteins and re-initiation at newly replicated origins. Repression is relieved when the region becomes fully methylated. The chain is Negative modulator of initiation of replication from Mannheimia succiniciproducens (strain KCTC 0769BP / MBEL55E).